Here is a 229-residue protein sequence, read N- to C-terminus: Potassium/proton antiporter CemA (229 aa).

3 consecutive transmembrane segments (helical) span residues Ala-6–Cys-26, Ile-107–Ala-127, and Ile-189–Ile-209.

Belongs to the CemA family.

Its subcellular location is the plastid. It is found in the chloroplast inner membrane. The enzyme catalyses K(+)(in) + H(+)(out) = K(+)(out) + H(+)(in). In terms of biological role, contributes to K(+)/H(+) antiport activity by supporting proton efflux to control proton extrusion and homeostasis in chloroplasts in a light-dependent manner to modulate photosynthesis. Prevents excessive induction of non-photochemical quenching (NPQ) under continuous-light conditions. Indirectly promotes efficient inorganic carbon uptake into chloroplasts. In Crucihimalaya wallichii (Rock-cress), this protein is Potassium/proton antiporter CemA.